The sequence spans 96 residues: DNA-directed RNA polymerase subunit Rpo11 (96 aa).

It belongs to the archaeal Rpo11/eukaryotic RPB11/RPC19 RNA polymerase subunit family. As to quaternary structure, part of the RNA polymerase complex.

The protein localises to the cytoplasm. It carries out the reaction RNA(n) + a ribonucleoside 5'-triphosphate = RNA(n+1) + diphosphate. DNA-dependent RNA polymerase (RNAP) catalyzes the transcription of DNA into RNA using the four ribonucleoside triphosphates as substrates. The sequence is that of DNA-directed RNA polymerase subunit Rpo11 from Methanococcus maripaludis (strain C5 / ATCC BAA-1333).